A 511-amino-acid polypeptide reads, in one-letter code: GMP synthase [glutamine-hydrolyzing] (511 aa).

The Glutamine amidotransferase type-1 domain maps to 5–195 (DILVLDFGSQ…AKYACNCESV (191 aa)). The Nucleophile role is filled by Cys-82. Active-site residues include His-169 and Glu-171. Residues 196-386 (WNMGSFAKTQ…LGLSKEVVYR (191 aa)) enclose the GMPS ATP-PPase domain. Position 223–229 (223–229 (SGGVDSS)) interacts with ATP.

As to quaternary structure, homodimer.

It carries out the reaction XMP + L-glutamine + ATP + H2O = GMP + L-glutamate + AMP + diphosphate + 2 H(+). It participates in purine metabolism; GMP biosynthesis; GMP from XMP (L-Gln route): step 1/1. Catalyzes the synthesis of GMP from XMP. This chain is GMP synthase [glutamine-hydrolyzing], found in Campylobacter jejuni subsp. doylei (strain ATCC BAA-1458 / RM4099 / 269.97).